The following is a 222-amino-acid chain: Thymidylate kinase (222 aa).

ATP is bound at residue 10 to 17 (GLEGAGKS).

It belongs to the thymidylate kinase family.

The catalysed reaction is dTMP + ATP = dTDP + ADP. Phosphorylation of dTMP to form dTDP in both de novo and salvage pathways of dTTP synthesis. The polypeptide is Thymidylate kinase (Alteromonas mediterranea (strain DSM 17117 / CIP 110805 / LMG 28347 / Deep ecotype)).